A 159-amino-acid chain; its full sequence is Flagellar assembly factor FliW (159 aa).

The protein belongs to the FliW family. In terms of assembly, interacts with translational regulator CsrA and flagellin(s).

Its subcellular location is the cytoplasm. Acts as an anti-CsrA protein, binds CsrA and prevents it from repressing translation of its target genes, one of which is flagellin. Binds to flagellin and participates in the assembly of the flagellum. In Geobacter sulfurreducens (strain ATCC 51573 / DSM 12127 / PCA), this protein is Flagellar assembly factor FliW.